Here is a 696-residue protein sequence, read N- to C-terminus: Polyribonucleotide nucleotidyltransferase (696 aa).

D489 and D495 together coordinate Mg(2+). The 60-residue stretch at 556 to 615 (PQYVTMKINPEKIRDVIGKGGVVIREITEATNCAIDISDDGTIKIAAHTTEEGEAAKRRI) folds into the KH domain. In terms of domain architecture, S1 motif spans 625–693 (GKVYEGTVVK…RQGRVRLSMK (69 aa)).

The protein belongs to the polyribonucleotide nucleotidyltransferase family. In terms of assembly, component of the RNA degradosome, which is a multiprotein complex involved in RNA processing and mRNA degradation. Mg(2+) is required as a cofactor.

It is found in the cytoplasm. The enzyme catalyses RNA(n+1) + phosphate = RNA(n) + a ribonucleoside 5'-diphosphate. Functionally, involved in mRNA degradation. Catalyzes the phosphorolysis of single-stranded polyribonucleotides processively in the 3'- to 5'-direction. The chain is Polyribonucleotide nucleotidyltransferase from Coxiella burnetii (strain RSA 331 / Henzerling II).